Here is an 86-residue protein sequence, read N- to C-terminus: UPF0335 protein BruAb1_1737 (86 aa).

It belongs to the UPF0335 family.

The chain is UPF0335 protein BruAb1_1737 from Brucella abortus biovar 1 (strain 9-941).